The sequence spans 384 residues: Beta-ureidopropionase (384 aa).

The 273-residue stretch at V72–L344 folds into the CN hydrolase domain. E119 acts as the Proton acceptor in catalysis. K196 acts as the Proton donor in catalysis. C233 (nucleophile) is an active-site residue. S378 is modified (phosphoserine).

Belongs to the carbon-nitrogen hydrolase superfamily. BUP family. As to quaternary structure, homodimer, homotetramer, homooctamer; can also form higher homooligomers. In terms of tissue distribution, detected in liver (at protein level).

It localises to the cytoplasm. The enzyme catalyses 3-(carbamoylamino)propanoate + H2O + 2 H(+) = beta-alanine + NH4(+) + CO2. The catalysed reaction is 3-(carbamoylamino)-2-methylpropanoate + H2O + 2 H(+) = (R)-3-amino-2-methylpropanoate + NH4(+) + CO2. The protein operates within amino-acid biosynthesis; beta-alanine biosynthesis. Strongly inhibited by 50 mM Zn(2+). Not inhibited by EDTA. Competitively inhibited by beta-alanine, 5-aminolevulinic acid (ALA), beta-aminoisobutyrate and 4-ureidobutyrate. In terms of biological role, catalyzes a late step in pyrimidine degradation. Converts N-carbamoyl-beta-alanine (3-ureidopropanoate) into beta-alanine, ammonia and carbon dioxide. Likewise, converts N-carbamoyl-beta-aminoisobutyrate (3-ureidoisobutyrate) into beta-aminoisobutyrate, ammonia and carbon dioxide. The sequence is that of Beta-ureidopropionase (UPB1) from Homo sapiens (Human).